The primary structure comprises 557 residues: Dihydroxy-acid dehydratase (557 aa).

Aspartate 78 lines the Mg(2+) pocket. Cysteine 119 contacts [2Fe-2S] cluster. Residues aspartate 120 and lysine 121 each contribute to the Mg(2+) site. At lysine 121 the chain carries N6-carboxylysine. Residue cysteine 191 coordinates [2Fe-2S] cluster. Glutamate 442 contacts Mg(2+). Serine 468 functions as the Proton acceptor in the catalytic mechanism.

This sequence belongs to the IlvD/Edd family. In terms of assembly, homodimer. Requires [2Fe-2S] cluster as cofactor. Mg(2+) serves as cofactor.

The enzyme catalyses (2R)-2,3-dihydroxy-3-methylbutanoate = 3-methyl-2-oxobutanoate + H2O. It catalyses the reaction (2R,3R)-2,3-dihydroxy-3-methylpentanoate = (S)-3-methyl-2-oxopentanoate + H2O. The protein operates within amino-acid biosynthesis; L-isoleucine biosynthesis; L-isoleucine from 2-oxobutanoate: step 3/4. Its pathway is amino-acid biosynthesis; L-valine biosynthesis; L-valine from pyruvate: step 3/4. Functionally, functions in the biosynthesis of branched-chain amino acids. Catalyzes the dehydration of (2R,3R)-2,3-dihydroxy-3-methylpentanoate (2,3-dihydroxy-3-methylvalerate) into 2-oxo-3-methylpentanoate (2-oxo-3-methylvalerate) and of (2R)-2,3-dihydroxy-3-methylbutanoate (2,3-dihydroxyisovalerate) into 2-oxo-3-methylbutanoate (2-oxoisovalerate), the penultimate precursor to L-isoleucine and L-valine, respectively. In Lachnoclostridium phytofermentans (strain ATCC 700394 / DSM 18823 / ISDg) (Clostridium phytofermentans), this protein is Dihydroxy-acid dehydratase.